The primary structure comprises 258 residues: Thrombin-like enzyme CPI-enzyme 2 (258 aa).

The N-terminal stretch at 1–18 is a signal peptide; that stretch reads MVLIRVLANLLILQLSYA. A propeptide spanning residues 19–24 is cleaved from the precursor; it reads QKSSEL. One can recognise a Peptidase S1 domain in the interval 25 to 249; that stretch reads VIGGDECNIN…YTDWIENIIA (225 aa). 6 disulfides stabilise this stretch: cysteine 31/cysteine 163, cysteine 50/cysteine 66, cysteine 98/cysteine 256, cysteine 142/cysteine 210, cysteine 174/cysteine 189, and cysteine 200/cysteine 225. Residue asparagine 44 is glycosylated (N-linked (GlcNAc...) asparagine). Histidine 65 serves as the catalytic Charge relay system. 2 N-linked (GlcNAc...) asparagine glycosylation sites follow: asparagine 79 and asparagine 103. Residue aspartate 110 is the Charge relay system of the active site. A glycan (N-linked (GlcNAc...) asparagine) is linked at asparagine 121. The active-site Charge relay system is serine 204.

This sequence belongs to the peptidase S1 family. Snake venom subfamily. As to quaternary structure, monomer. In terms of processing, N-glycosylated. As to expression, expressed by the venom gland.

The protein localises to the secreted. In terms of biological role, thrombin-like snake venom serine protease that cleaves fibrinogen beta (FGB) releasing fibrinopeptide B. Promotes capillary permeability-increasing activity through the release of peptides from the beta-chain of fibrinogen. This Gloydius ussuriensis (Ussuri mamushi) protein is Thrombin-like enzyme CPI-enzyme 2.